Reading from the N-terminus, the 211-residue chain is Ribosomal RNA small subunit methyltransferase G (211 aa).

S-adenosyl-L-methionine contacts are provided by residues G73, 125–126 (IE), and R141.

This sequence belongs to the methyltransferase superfamily. RNA methyltransferase RsmG family.

The protein resides in the cytoplasm. It catalyses the reaction guanosine(527) in 16S rRNA + S-adenosyl-L-methionine = N(7)-methylguanosine(527) in 16S rRNA + S-adenosyl-L-homocysteine. Specifically methylates the N7 position of guanine in position 527 of 16S rRNA. The sequence is that of Ribosomal RNA small subunit methyltransferase G from Methylobacterium radiotolerans (strain ATCC 27329 / DSM 1819 / JCM 2831 / NBRC 15690 / NCIMB 10815 / 0-1).